We begin with the raw amino-acid sequence, 132 residues long: Interleukin-5 (132 aa).

The first 17 residues, 1–17 (MRLPLQLSILTLAWVWA), serve as a signal peptide directing secretion. N-linked (GlcNAc...) asparagine glycosylation is found at asparagine 45, asparagine 74, and asparagine 88.

This sequence belongs to the IL-5 family. As to quaternary structure, homodimer; disulfide-linked. Interacts with IL5RA. Interacts with CSF2RB.

It localises to the secreted. Functionally, homodimeric cytokine expressed predominantly by T-lymphocytes and NK cells that plays an important role in the survival, differentiation, and chemotaxis of eosinophils. Also acts on activated and resting B-cells to induce immunoglobulin production, growth, and differentiation. Mechanistically, exerts its biological effects through a receptor composed of IL5RA subunit and the cytokine receptor common subunit beta/CSF2RB. Binding to the receptor leads to activation of various kinases including LYN, SYK and JAK2 and thereby propagates signals through the RAS-MAPK and JAK-STAT5 pathways respectively. This is Interleukin-5 (IL5) from Meriones unguiculatus (Mongolian jird).